We begin with the raw amino-acid sequence, 95 residues long: MSLDPATVRRIARLARIGIDESDLHALQGELNGILGWIEQLNEVDIDGVEPMVGTGHAALRMREDVVTDGAARDAVLSNAPDAAGPFYTVPKVVE.

The protein belongs to the GatC family. Heterotrimer of A, B and C subunits.

The catalysed reaction is L-glutamyl-tRNA(Gln) + L-glutamine + ATP + H2O = L-glutaminyl-tRNA(Gln) + L-glutamate + ADP + phosphate + H(+). It catalyses the reaction L-aspartyl-tRNA(Asn) + L-glutamine + ATP + H2O = L-asparaginyl-tRNA(Asn) + L-glutamate + ADP + phosphate + 2 H(+). Its function is as follows. Allows the formation of correctly charged Asn-tRNA(Asn) or Gln-tRNA(Gln) through the transamidation of misacylated Asp-tRNA(Asn) or Glu-tRNA(Gln) in organisms which lack either or both of asparaginyl-tRNA or glutaminyl-tRNA synthetases. The reaction takes place in the presence of glutamine and ATP through an activated phospho-Asp-tRNA(Asn) or phospho-Glu-tRNA(Gln). The polypeptide is Aspartyl/glutamyl-tRNA(Asn/Gln) amidotransferase subunit C (Gluconacetobacter diazotrophicus (strain ATCC 49037 / DSM 5601 / CCUG 37298 / CIP 103539 / LMG 7603 / PAl5)).